Consider the following 176-residue polypeptide: Large ribosomal subunit protein uL6 (176 aa).

Belongs to the universal ribosomal protein uL6 family. In terms of assembly, part of the 50S ribosomal subunit.

Its function is as follows. This protein binds to the 23S rRNA, and is important in its secondary structure. It is located near the subunit interface in the base of the L7/L12 stalk, and near the tRNA binding site of the peptidyltransferase center. The chain is Large ribosomal subunit protein uL6 from Methanospirillum hungatei JF-1 (strain ATCC 27890 / DSM 864 / NBRC 100397 / JF-1).